The sequence spans 130 residues: KIFEDPTTSYKYSISMTTRHMREGEIDGVDYFFKTKEEFEALIKDDQFIEYAQYVGNYYGTPVQYVKDTMEEGHDVFLEIEVEGAKQVRKKFPDALFIFLAPPSLDDLKERLVGRGTESDEKIQSRVNEA.

Positions 1-130 (KIFEDPTTSY…EKIQSRVNEA (130 aa)) constitute a Guanylate kinase-like domain.

Belongs to the guanylate kinase family.

The protein resides in the cytoplasm. It carries out the reaction GMP + ATP = GDP + ADP. In terms of biological role, essential for recycling GMP and indirectly, cGMP. In Staphylococcus epidermidis, this protein is Guanylate kinase (gmk).